We begin with the raw amino-acid sequence, 372 residues long: Flagellar P-ring protein (372 aa).

Residues 1–26 (MNLSSLPHRLLAAAVALCAIAAPASA) form the signal peptide.

Belongs to the FlgI family. The basal body constitutes a major portion of the flagellar organelle and consists of four rings (L,P,S, and M) mounted on a central rod.

The protein localises to the periplasm. Its subcellular location is the bacterial flagellum basal body. Assembles around the rod to form the L-ring and probably protects the motor/basal body from shearing forces during rotation. This chain is Flagellar P-ring protein, found in Xanthomonas campestris pv. campestris (strain ATCC 33913 / DSM 3586 / NCPPB 528 / LMG 568 / P 25).